The sequence spans 182 residues: Pyruvoyl-dependent arginine decarboxylase (182 aa).

Position 44 is a pyruvic acid (Ser) (Ser-44).

This sequence belongs to the PdaD family. Requires pyruvate as cofactor.

It catalyses the reaction L-arginine + H(+) = agmatine + CO2. This is Pyruvoyl-dependent arginine decarboxylase from Thermoplasma volcanium (strain ATCC 51530 / DSM 4299 / JCM 9571 / NBRC 15438 / GSS1).